Consider the following 369-residue polypeptide: WAT1-related protein At3g53210 (369 aa).

Transmembrane regions (helical) follow at residues 12–31 (IAMVVFQTGYAGNHVIMRYA), 39–59 (LVFPLYRTIVAFSVLAPSAYF), 72–92 (FLIQFFLLGLVGITLNQGFYI), 103–123 (ASATENVVPAVSFLMAALLGI), 133–153 (GIAKVVGTIVSVAGSLVITLY), 182–202 (WTLGCLCLMGHCLCWSSWIVL), 214–234 (FSFVSYSCFFAVIQFFGISAY), 252–272 (ALLYTGLVGSAMVFAIQIYVV), 278–298 (LFVSAYLPLQTLIAAVLATLA), and 303–323 (FYLGGLIGAILIMSGLYLVVM). 2 EamA domains span residues 24–150 (NHVI…SLVI) and 194–323 (LCWS…LVVM). Positions 348-369 (GDEEDYHNNKPRSPISQPLISS) are disordered.

This sequence belongs to the drug/metabolite transporter (DMT) superfamily. Plant drug/metabolite exporter (P-DME) (TC 2.A.7.4) family.

It localises to the membrane. The chain is WAT1-related protein At3g53210 from Arabidopsis thaliana (Mouse-ear cress).